A 428-amino-acid polypeptide reads, in one-letter code: AP2-like ethylene-responsive transcription factor At2g41710 (428 aa).

Residues 1–10 (MASVSSSDQG) show a composition bias toward polar residues. The segment at 1–28 (MASVSSSDQGPKTEAGCSGGGGGESSET) is disordered. The segment at residues 70-136 (IYRGVTRHRW…WGPGTLINFP (67 aa)) is a DNA-binding region (AP2/ERF).

This sequence belongs to the AP2/ERF transcription factor family. AP2 subfamily.

Its subcellular location is the nucleus. In terms of biological role, probably acts as a transcriptional activator. Binds to the GCC-box pathogenesis-related promoter element. May be involved in the regulation of gene expression by stress factors and by components of stress signal transduction pathways. This is AP2-like ethylene-responsive transcription factor At2g41710 from Arabidopsis thaliana (Mouse-ear cress).